Consider the following 470-residue polypeptide: Probable citrate synthase, mitochondrial (470 aa).

Active-site residues include histidine 297, histidine 351, and aspartate 406.

The protein belongs to the citrate synthase family. As to quaternary structure, homodimer.

It is found in the mitochondrion matrix. It catalyses the reaction oxaloacetate + acetyl-CoA + H2O = citrate + CoA + H(+). Its pathway is carbohydrate metabolism; tricarboxylic acid cycle; isocitrate from oxaloacetate: step 1/2. The polypeptide is Probable citrate synthase, mitochondrial (Leishmania infantum).